Consider the following 471-residue polypeptide: Lincomycin resistance protein LmrB (471 aa).

13 helical membrane passes run 15–34, 55–77, 82–104, 111–131, 141–163, 170–187, 202–224, 231–253, 268–290, 297–319, 329–351, 358–380, and 445–467; these read PIIASFLMAGFIGLFSETAL, LTTGYLLTLGILVPISGLLLQWF, LFFTAVSFSIAGTLIAALSPTFA, VVQAVGTALLLPLMFNTILLI, MGMIGLVIMFAPAVGPTISGLIL, WIFWISLPFLIIALLFGM, DILSIILSTLGFGGVVFAFSSAG, ATVLVSIIVGGIALGLFVWRQLT, MFTLGLILVFISFMMILSTMILL, SLALAAFSAGLVLLPGGVLNGLM, AYGPRALVIPGFIVAVIALFFLT, SALTIIVLHSVLMIGISMVMMPA, and GIQNAFVFGLIMACIGLLCSLFI.

This sequence belongs to the major facilitator superfamily. EmrB family.

It localises to the cell membrane. Functionally, proton-dependent transporter. May mediate the efflux of lincomycin. The polypeptide is Lincomycin resistance protein LmrB (lmrB) (Listeria innocua serovar 6a (strain ATCC BAA-680 / CLIP 11262)).